The sequence spans 158 residues: UPF0260 protein RHECIAT_CH0001358 (158 aa).

This sequence belongs to the UPF0260 family.

The polypeptide is UPF0260 protein RHECIAT_CH0001358 (Rhizobium etli (strain CIAT 652)).